The following is a 1414-amino-acid chain: Phenyloxazoline synthase MbtB (1414 aa).

The region spanning 5–78 (TACSEIIRAE…AWSQLVSAGT (74 aa)) is the Carrier 1 domain. Ser39 carries the post-translational modification O-(pantetheine 4'-phosphoryl)serine. The tract at residues 96 to 394 (EGEPFPLAPM…SSLLLDVDLT (299 aa)) is condensation/cyclization. The segment at 579 to 975 (SYAQLRDQAS…RLPGVHAAAA (397 aa)) is adenylation. Positions 1057–1135 (APRTVLQRAL…ALAQLLTGRE (79 aa)) constitute a Carrier 2 domain. At Ser1094 the chain carries O-(pantetheine 4'-phosphoryl)serine. Residues 1188-1413 (GAVLVFPHAG…AVARMVSADV (226 aa)) form a thioesterase region.

This sequence belongs to the ATP-dependent AMP-binding enzyme family. MbtB subfamily. Requires pantetheine 4'-phosphate as cofactor. In terms of processing, 4'-phosphopantetheine is transferred from CoA to a specific serine in each of the two carrier protein domains, leading to their activation from apo to holo forms.

The protein operates within siderophore biosynthesis; mycobactin biosynthesis. In terms of biological role, involved in the initial steps of the mycobactin biosynthetic pathway. Putatively couples activated salicylic acid with serine or threonine and cyclizes this precursor to the hydroxyphenyloxazoline ring system present in this class of siderophores. In Mycobacterium bovis (strain ATCC BAA-935 / AF2122/97), this protein is Phenyloxazoline synthase MbtB (mbtB).